We begin with the raw amino-acid sequence, 594 residues long: Proteasome-associated ATPase (594 aa).

The span at 1 to 12 (MTETSANKPENT) shows a compositional bias: polar residues. Residues 1–20 (MTETSANKPENTQAHEGRDY) are disordered. The stretch at 18–71 (RDYSVLERQFNVLRDKLRNVDRQLAAATQNNTKMTTTLQSAKAEILRLKSALEK) forms a coiled coil. Position 282-287 (282-287 (GCGKTL)) interacts with ATP. Positions 593–594 (YL) are docks into pockets in the proteasome alpha-ring.

This sequence belongs to the AAA ATPase family. In terms of assembly, homohexamer. Assembles into a hexameric ring structure that caps the 20S proteasome core. Strongly interacts with the prokaryotic ubiquitin-like protein Pup through a hydrophobic interface; the interacting region of ARC lies in its N-terminal coiled-coil domain. There is one Pup binding site per ARC hexamer ring. Upon ATP-binding, the C-terminus of ARC interacts with the alpha-rings of the proteasome core, possibly by binding to the intersubunit pockets.

It participates in protein degradation; proteasomal Pup-dependent pathway. ATPase which is responsible for recognizing, binding, unfolding and translocation of pupylated proteins into the bacterial 20S proteasome core particle. May be essential for opening the gate of the 20S proteasome via an interaction with its C-terminus, thereby allowing substrate entry and access to the site of proteolysis. Thus, the C-termini of the proteasomal ATPase may function like a 'key in a lock' to induce gate opening and therefore regulate proteolysis. This Renibacterium salmoninarum (strain ATCC 33209 / DSM 20767 / JCM 11484 / NBRC 15589 / NCIMB 2235) protein is Proteasome-associated ATPase.